Consider the following 292-residue polypeptide: Nucleotide-binding protein azo0399 (292 aa).

8–15 (GLSGSGKS) is a binding site for ATP. 57–60 (DMRS) serves as a coordination point for GTP.

It belongs to the RapZ-like family.

Displays ATPase and GTPase activities. The polypeptide is Nucleotide-binding protein azo0399 (Azoarcus sp. (strain BH72)).